Reading from the N-terminus, the 535-residue chain is 2-isopropylmalate synthase (535 aa).

The region spanning 13–274 (VLIFDTTLRD…YFNPFLGRPP (262 aa)) is the Pyruvate carboxyltransferase domain. The Mn(2+) site is built by Asp22, His213, His215, and Asn249. Positions 414–535 (QLEFVQVSCG…LEQRALHPQA (122 aa)) are regulatory domain.

The protein belongs to the alpha-IPM synthase/homocitrate synthase family. LeuA type 1 subfamily. In terms of assembly, homodimer. It depends on Mn(2+) as a cofactor.

Its subcellular location is the cytoplasm. The enzyme catalyses 3-methyl-2-oxobutanoate + acetyl-CoA + H2O = (2S)-2-isopropylmalate + CoA + H(+). The protein operates within amino-acid biosynthesis; L-leucine biosynthesis; L-leucine from 3-methyl-2-oxobutanoate: step 1/4. Catalyzes the condensation of the acetyl group of acetyl-CoA with 3-methyl-2-oxobutanoate (2-ketoisovalerate) to form 3-carboxy-3-hydroxy-4-methylpentanoate (2-isopropylmalate). This Thermosynechococcus vestitus (strain NIES-2133 / IAM M-273 / BP-1) protein is 2-isopropylmalate synthase.